A 31-amino-acid polypeptide reads, in one-letter code: Cytochrome b6-f complex subunit 6 (31 aa).

The helical transmembrane segment at 4–24 threads the bilayer; the sequence is ITSYFGFLLAVLTITSALFIG.

It belongs to the PetL family. In terms of assembly, the 4 large subunits of the cytochrome b6-f complex are cytochrome b6, subunit IV (17 kDa polypeptide, PetD), cytochrome f and the Rieske protein, while the 4 small subunits are PetG, PetL, PetM and PetN. The complex functions as a dimer.

It localises to the plastid. Its subcellular location is the chloroplast thylakoid membrane. Its function is as follows. Component of the cytochrome b6-f complex, which mediates electron transfer between photosystem II (PSII) and photosystem I (PSI), cyclic electron flow around PSI, and state transitions. PetL is important for photoautotrophic growth as well as for electron transfer efficiency and stability of the cytochrome b6-f complex. The chain is Cytochrome b6-f complex subunit 6 from Cucumis sativus (Cucumber).